Here is a 268-residue protein sequence, read N- to C-terminus: Endonuclease 8 1 (268 aa).

Proline 2 functions as the Schiff-base intermediate with DNA in the catalytic mechanism. Glutamate 3 serves as the catalytic Proton donor. Lysine 52 acts as the Proton donor; for beta-elimination activity in catalysis. DNA contacts are provided by arginine 125 and asparagine 166. The FPG-type zinc-finger motif lies at 234–268 (YVYRRAGEPCRVCGGVIRTALLEGRNVFWCPVCQT). Arginine 258 serves as the catalytic Proton donor; for delta-elimination activity.

Belongs to the FPG family. It depends on Zn(2+) as a cofactor.

The catalysed reaction is 2'-deoxyribonucleotide-(2'-deoxyribose 5'-phosphate)-2'-deoxyribonucleotide-DNA = a 3'-end 2'-deoxyribonucleotide-(2,3-dehydro-2,3-deoxyribose 5'-phosphate)-DNA + a 5'-end 5'-phospho-2'-deoxyribonucleoside-DNA + H(+). Involved in base excision repair of DNA damaged by oxidation or by mutagenic agents. Acts as a DNA glycosylase that recognizes and removes damaged bases. Has AP (apurinic/apyrimidinic) lyase activity and introduces nicks in the DNA strand. Cleaves the DNA backbone by beta-delta elimination to generate a single-strand break at the site of the removed base with both 3'- and 5'-phosphates. The chain is Endonuclease 8 1 (nei1) from Mycobacterium bovis (strain ATCC BAA-935 / AF2122/97).